A 305-amino-acid chain; its full sequence is Ribonuclease BN (305 aa).

7 residues coordinate Zn(2+): His64, His66, Asp68, His69, His141, Asp212, and His270. Asp68 functions as the Proton acceptor in the catalytic mechanism.

It belongs to the RNase Z family. RNase BN subfamily. Homodimer. The cofactor is Zn(2+).

Zinc phosphodiesterase, which has both exoribonuclease and endoribonuclease activities. This Escherichia coli O6:K15:H31 (strain 536 / UPEC) protein is Ribonuclease BN.